The following is a 455-amino-acid chain: Ribulose bisphosphate carboxylase large chain (455 aa).

K5 is subject to N6,N6,N6-trimethyllysine. Substrate is bound by residues N114 and T164. The active-site Proton acceptor is K166. Substrate is bound at residue K168. Residues K192, D194, and E195 each contribute to the Mg(2+) site. K192 carries the post-translational modification N6-carboxylysine. H285 serves as the catalytic Proton acceptor. Positions 286, 318, and 370 each coordinate substrate.

Belongs to the RuBisCO large chain family. Type I subfamily. In terms of assembly, heterohexadecamer of 8 large chains and 8 small chains; disulfide-linked. The disulfide link is formed within the large subunit homodimers. The cofactor is Mg(2+). The disulfide bond which can form in the large chain dimeric partners within the hexadecamer appears to be associated with oxidative stress and protein turnover.

It is found in the plastid. It localises to the chloroplast. The enzyme catalyses 2 (2R)-3-phosphoglycerate + 2 H(+) = D-ribulose 1,5-bisphosphate + CO2 + H2O. It carries out the reaction D-ribulose 1,5-bisphosphate + O2 = 2-phosphoglycolate + (2R)-3-phosphoglycerate + 2 H(+). Functionally, ruBisCO catalyzes two reactions: the carboxylation of D-ribulose 1,5-bisphosphate, the primary event in carbon dioxide fixation, as well as the oxidative fragmentation of the pentose substrate in the photorespiration process. Both reactions occur simultaneously and in competition at the same active site. The protein is Ribulose bisphosphate carboxylase large chain of Vachellia farnesiana (Sweet acacia).